Consider the following 200-residue polypeptide: Recombination protein RecR (200 aa).

The C4-type zinc finger occupies 57-72 (CSECRTFTEEDTCAIC). The Toprim domain occupies 81–176 (GELCIVESPA…SASRIAHGVP (96 aa)).

It belongs to the RecR family.

Functionally, may play a role in DNA repair. It seems to be involved in an RecBC-independent recombinational process of DNA repair. It may act with RecF and RecO. This chain is Recombination protein RecR, found in Aliivibrio salmonicida (strain LFI1238) (Vibrio salmonicida (strain LFI1238)).